The chain runs to 396 residues: NADH-quinone oxidoreductase subunit D (396 aa).

This sequence belongs to the complex I 49 kDa subunit family. As to quaternary structure, NDH-1 is composed of 14 different subunits. Subunits NuoB, C, D, E, F, and G constitute the peripheral sector of the complex.

The protein resides in the cell inner membrane. The enzyme catalyses a quinone + NADH + 5 H(+)(in) = a quinol + NAD(+) + 4 H(+)(out). NDH-1 shuttles electrons from NADH, via FMN and iron-sulfur (Fe-S) centers, to quinones in the respiratory chain. The immediate electron acceptor for the enzyme in this species is believed to be ubiquinone. Couples the redox reaction to proton translocation (for every two electrons transferred, four hydrogen ions are translocated across the cytoplasmic membrane), and thus conserves the redox energy in a proton gradient. This Brucella suis biovar 1 (strain 1330) protein is NADH-quinone oxidoreductase subunit D.